The primary structure comprises 298 residues: Probable tRNA(His) guanylyltransferase (298 aa).

Mg(2+) is bound by residues D58, G59, and D105. GTP is bound by residues 58-63 and 104-105; these read DGRNFH and SD.

It belongs to the tRNA(His) guanylyltransferase family. Homotetramer. Interacts with MFN1 and MFN2; functions as a guanyl-nucleotide exchange factor/GEF for MFN2 and also probably MFN1. Requires Mg(2+) as cofactor.

It is found in the cytoplasm. It localises to the mitochondrion. The catalysed reaction is a 5'-end ribonucleotide-tRNA(His) + GTP + ATP + H2O = a 5'-end phospho-guanosine-ribonucleotide-tRNA(His) + AMP + 2 diphosphate + H(+). In terms of biological role, adds a GMP to the 5'-end of tRNA(His) after transcription and RNase P cleavage. This step is essential for proper recognition of the tRNA and for the fidelity of protein synthesis. Also functions as a guanyl-nucleotide exchange factor/GEF for the MFN1 and MFN2 mitofusins thereby regulating mitochondrial fusion. By regulating both mitochondrial dynamics and bioenergetic function, it contributes to cell survival following oxidative stress. This Bos taurus (Bovine) protein is Probable tRNA(His) guanylyltransferase (THG1L).